The chain runs to 458 residues: Retinoic acid receptor alpha (458 aa).

The segment at 1 to 86 (MASNGGSCPS…PPPLPRIYKP (86 aa)) is modulating. Residues 54-68 (TPSPATIETQSTSSE) show a composition bias toward polar residues. The segment at 54–76 (TPSPATIETQSTSSEEIVPSPPS) is disordered. 2 consecutive NR C4-type zinc fingers follow at residues 87–107 (CFVC…CEGC) and 123–147 (CHRD…LQKC). Residues 87–152 (CFVCQDKSSG…RLQKCFEVGM (66 aa)) constitute a DNA-binding region (nuclear receptor). The interval 153–182 (SKESVRNDRNKKKKQEAPKQECTESYIITP) is hinge. In terms of domain architecture, NR LBD spans 183–417 (EVEDLVEKVR…PLIQEMLENS (235 aa)). A 9aaTAD motif is present at residues 408 to 416 (PLIQEMLEN). Positions 417–458 (SEGLDSLTGQPPRASSLAPPPGSCSPSLSPSSNRSSPTSHSP) are disordered. Residues 440–458 (CSPSLSPSSNRSSPTSHSP) are compositionally biased toward low complexity.

This sequence belongs to the nuclear hormone receptor family. NR1 subfamily. Heterodimer; with an rxr molecule. Binds DNA preferentially as a rar/rxr heterodimer. As to expression, expressed in forelimb, in the distal forelimb blastema, kidney, liver and hindlimb blastemal mesenchymal cells.

It localises to the nucleus. In terms of biological role, receptor for retinoic acid. Retinoic acid receptors bind as heterodimers to their target response elements in response to their ligands, all-trans or 9-cis retinoic acid, and regulate gene expression in various biological processes. The rar/rxr heterodimers bind to the retinoic acid response elements (RARE) composed of tandem 5'-AGGTCA-3' sites known as DR1-DR5. Retinoic acid signaling appears to be involved in specifying proximal-distal axis in limb regeneration. In Notophthalmus viridescens (Eastern newt), this protein is Retinoic acid receptor alpha (RARA).